A 241-amino-acid polypeptide reads, in one-letter code: Dephospho-CoA kinase CAB5 (241 aa).

Positions 3–211 constitute a DPCK domain; the sequence is VVGLTGGIAC…PSKLRTVLEY (209 aa). Residue 8–15 participates in ATP binding; sequence GGIACGKS.

The protein belongs to the CoaE family.

The protein resides in the endoplasmic reticulum. It is found in the mitochondrion. The protein localises to the nucleus. It carries out the reaction 3'-dephospho-CoA + ATP = ADP + CoA + H(+). The protein operates within cofactor biosynthesis; coenzyme A biosynthesis; CoA from (R)-pantothenate: step 5/5. Its function is as follows. Catalyzes the phosphorylation of the 3'-hydroxyl group of dephosphocoenzyme A to form coenzyme A. This Saccharomyces cerevisiae (strain ATCC 204508 / S288c) (Baker's yeast) protein is Dephospho-CoA kinase CAB5 (CAB5).